The sequence spans 292 residues: RNA-binding P34 protein (292 aa).

The chain crosses the membrane as a helical span at residues 29 to 46 (CAIYTVACRILFLSVGFM). The segment at 219–292 (EGFKSPQVEY…NFKAKNKNNE (74 aa)) is RNA-binding.

It localises to the host endoplasmic reticulum membrane. Acts as a ssRNA-binding protein that may be involved in targeting RNA2 to replication sites or facilitating RNA2 replication. This Lettuce infectious yellows virus (isolate United States/92) (LIYV) protein is RNA-binding P34 protein.